The sequence spans 185 residues: Segregation and condensation protein B (185 aa).

This sequence belongs to the ScpB family. As to quaternary structure, homodimer. Homodimerization may be required to stabilize the binding of ScpA to the Smc head domains. Component of a cohesin-like complex composed of ScpA, ScpB and the Smc homodimer, in which ScpA and ScpB bind to the head domain of Smc. The presence of the three proteins is required for the association of the complex with DNA.

Its subcellular location is the cytoplasm. Participates in chromosomal partition during cell division. May act via the formation of a condensin-like complex containing Smc and ScpA that pull DNA away from mid-cell into both cell halves. In Carboxydothermus hydrogenoformans (strain ATCC BAA-161 / DSM 6008 / Z-2901), this protein is Segregation and condensation protein B.